The following is a 315-amino-acid chain: Cysteine synthase (315 aa).

Hydrogen sulfide contacts are provided by N8 and R35. N6-(pyridoxal phosphate)lysine is present on K42. Pyridoxal 5'-phosphate contacts are provided by residues N72 and G177–T181. Residue L269 coordinates hydrogen sulfide. A pyridoxal 5'-phosphate-binding site is contributed by S273.

Belongs to the cysteine synthase/cystathionine beta-synthase family. As to quaternary structure, homodimer. Pyridoxal 5'-phosphate serves as cofactor.

The catalysed reaction is O-acetyl-L-serine + hydrogen sulfide = L-cysteine + acetate. The protein operates within amino-acid biosynthesis; L-cysteine biosynthesis; L-cysteine from L-serine: step 2/2. This chain is Cysteine synthase (cysK), found in Buchnera aphidicola subsp. Acyrthosiphon pisum (strain APS) (Acyrthosiphon pisum symbiotic bacterium).